The primary structure comprises 213 residues: Orotate phosphoribosyltransferase (213 aa).

Residue K26 coordinates 5-phospho-alpha-D-ribose 1-diphosphate. Residue 34 to 35 (FF) coordinates orotate. 5-phospho-alpha-D-ribose 1-diphosphate is bound by residues 72–73 (YK), R98, K99, K102, and 123–131 (DDVISAGTS). The orotate site is built by S127 and R155.

It belongs to the purine/pyrimidine phosphoribosyltransferase family. PyrE subfamily. As to quaternary structure, homodimer. Mg(2+) is required as a cofactor.

It carries out the reaction orotidine 5'-phosphate + diphosphate = orotate + 5-phospho-alpha-D-ribose 1-diphosphate. It functions in the pathway pyrimidine metabolism; UMP biosynthesis via de novo pathway; UMP from orotate: step 1/2. Catalyzes the transfer of a ribosyl phosphate group from 5-phosphoribose 1-diphosphate to orotate, leading to the formation of orotidine monophosphate (OMP). The polypeptide is Orotate phosphoribosyltransferase (Neisseria gonorrhoeae (strain NCCP11945)).